A 437-amino-acid chain; its full sequence is Aspartic proteinase CDR1 (437 aa).

Residues 1-25 form the signal peptide; sequence MASLFSSVLLSLCLLSSLFLSNANA. Positions 26-73 are cleaved as a propeptide — activation peptide; the sequence is KPKLGFTADLIHRDSPKSPFYNPMETSSQRLRNAIHRSVNRVFHFTEK. In terms of domain architecture, Peptidase A1 spans 90 to 430; that stretch reads YLMNVSIGTP…DTVSKTVSFK (341 aa). Asn-93 is a glycosylation site (N-linked (GlcNAc...) asparagine). Residues Asp-108 and Asp-319 contribute to the active site.

Belongs to the peptidase A1 family.

It localises to the secreted. It is found in the extracellular space. Its subcellular location is the apoplast. Its function is as follows. Involved in salicylic acid-dependent inducible resistance responses. May release an endogenous peptide elicitor required for the activation of inducible resistance mechanisms. Possesses protease activity in vitro. In Arabidopsis thaliana (Mouse-ear cress), this protein is Aspartic proteinase CDR1 (CDR1).